Reading from the N-terminus, the 422-residue chain is Mannose-1-phosphate guanylyltransferase regulatory subunit alpha-A (422 aa).

Residues 2–253 (LKAVILIGGP…DRFWSQIKSA (252 aa)) form a substrate-binding domain region. Glu85 and Gln249 together coordinate GDP-alpha-D-mannose. The segment at 275–422 (LATNTEGGAK…NRSFKNQIIL (148 aa)) is hexapeptide repeat domain. Residues 358 to 386 (TPSDPNPNDPYAKIDSETLFRDGKLTPSI) form a C-loop region.

This sequence belongs to the transferase hexapeptide repeat family. In terms of assembly, component of the GMPPA-GMPPB mannose-1-phosphate guanylyltransferase complex composed of 4 gmppa subunits and 8 gmppb subunits; the complex is organized into three layers, a central layer made up of 2 gmppa dimers sandwiched between two layers each made up of 2 gmppb dimers.

The protein operates within nucleotide-sugar biosynthesis; GDP-alpha-D-mannose biosynthesis; GDP-alpha-D-mannose from alpha-D-mannose 1-phosphate (GTP route): step 1/1. Regulatory subunit of the GMPPA-GMPPB mannose-1-phosphate guanylyltransferase complex; reduces the catalytic activity of GMPPB when part of the complex. Mediates allosteric feedback inhibition of GMPPB catalytic activity upon binding GDP-alpha-D-mannose. Together with GMPPB regulates GDP-alpha-D-mannose levels. One of two paralogs (gmppaa and gmppab) that may have redundant functions. The protein is Mannose-1-phosphate guanylyltransferase regulatory subunit alpha-A (gmppaa) of Danio rerio (Zebrafish).